Consider the following 201-residue polypeptide: MKKIGLFGGTFDPIHNGHLHIARAFADEIGLDAVVFLPAGGPYHKDAASASAADRLAMVELATAEDARFAVSDCDIVREGATYTFDTVQIFRQQFPSAQLWWLMGSDSLMKLHTWKKWQMLVRETNIAVAMRQGDSLHQTPRELHAWLGKSLQDGSVRILSAPMHNVSSTEIRRNLASQGVSDGIPPAAARYIREHGLYEK.

It belongs to the NadD family.

It catalyses the reaction nicotinate beta-D-ribonucleotide + ATP + H(+) = deamido-NAD(+) + diphosphate. The protein operates within cofactor biosynthesis; NAD(+) biosynthesis; deamido-NAD(+) from nicotinate D-ribonucleotide: step 1/1. Its function is as follows. Catalyzes the reversible adenylation of nicotinate mononucleotide (NaMN) to nicotinic acid adenine dinucleotide (NaAD). This Neisseria meningitidis serogroup C / serotype 2a (strain ATCC 700532 / DSM 15464 / FAM18) protein is Probable nicotinate-nucleotide adenylyltransferase.